We begin with the raw amino-acid sequence, 256 residues long: Floral homeotic protein APETALA 1 (256 aa).

The region spanning 1–61 (MGRGRVQLKR…GKLFEYSTDS (61 aa)) is the MADS-box domain. In terms of domain architecture, K-box spans 88-178 (NTNWSMEYNR…SKQIKEREKI (91 aa)). Residues 88–185 (NTNWSMEYNR…EKILRAQQEQ (98 aa)) are a coiled coil.

As to quaternary structure, homodimer capable of binding to CArG-box sequences. Heterodimer with SEP3, AP1 and SVP. Binds AP3/PI to form a ternary complex. Interacts with the SEU-LUG corepressor complex when complexed to AGL24 or SVP. Interacts with AGL15 and AGL16. Interacts with TT16/AGL32. In terms of tissue distribution, expressed in young flower primordia, later becomes localized to sepals and petals.

The protein localises to the nucleus. Transcription factor that promotes early floral meristem identity in synergy with LEAFY. Is required subsequently for the transition of an inflorescence meristem into a floral meristem. Is indispensable for normal development of sepals and petals in flowers. Positively regulates the B class homeotic proteins APETALA3 and PISTILLATA with the cooperation of LEAFY and UFO. Interacts with SEPALLATA3 or AP3/PI heterodimer to form complexes that could be involved in genes regulation during floral meristem development. Positively regulates AGAMOUS in cooperation with LEAFY. Displays a redundant function with CAULIFLOWER in the up-regulation of LEAFY. Together with AGL24 and SVP, controls the identity of the floral meristem and regulates expression of class B, C and E genes. Represses flowering time genes AGL24, SVP and SOC1 in emerging floral meristems. This Arabidopsis thaliana (Mouse-ear cress) protein is Floral homeotic protein APETALA 1 (AP1).